Reading from the N-terminus, the 217-residue chain is Pyrrolidone-carboxylate peptidase (217 aa).

Catalysis depends on residues Glu78, Cys141, and His168.

It belongs to the peptidase C15 family. As to quaternary structure, homotetramer.

Its subcellular location is the cytoplasm. The enzyme catalyses Release of an N-terminal pyroglutamyl group from a polypeptide, the second amino acid generally not being Pro.. Removes 5-oxoproline from various penultimate amino acid residues except L-proline. In Treponema denticola (strain ATCC 35405 / DSM 14222 / CIP 103919 / JCM 8153 / KCTC 15104), this protein is Pyrrolidone-carboxylate peptidase.